A 209-amino-acid polypeptide reads, in one-letter code: Ubiquinone biosynthesis protein COQ4 homolog 2, mitochondrial (209 aa).

Residues His-118, Asp-119, His-122, and Glu-134 each coordinate Zn(2+).

This sequence belongs to the COQ4 family. As to quaternary structure, component of a multi-subunit COQ enzyme complex. The cofactor is Zn(2+).

The protein localises to the mitochondrion inner membrane. The enzyme catalyses a 4-hydroxy-3-methoxy-5-(all-trans-polyprenyl)benzoate + H(+) = a 2-methoxy-6-(all-trans-polyprenyl)phenol + CO2. It functions in the pathway cofactor biosynthesis; ubiquinone biosynthesis. Functionally, lyase that catalyzes the C1-decarboxylation of 4-hydroxy-3-methoxy-5-(all-trans-polyprenyl)benzoic acid into 2-methoxy-6-(all-trans-polyprenyl)phenol during ubiquinone biosynthesis. This chain is Ubiquinone biosynthesis protein COQ4 homolog 2, mitochondrial, found in Paramecium tetraurelia.